The chain runs to 425 residues: Glutamyl-tRNA reductase (425 aa).

Substrate is bound by residues 49 to 52 (TCNR), serine 107, 112 to 114 (EPQ), and glutamine 118. The active-site Nucleophile is cysteine 50. 187–192 (GAGETI) is an NADP(+) binding site.

It belongs to the glutamyl-tRNA reductase family. In terms of assembly, homodimer.

It catalyses the reaction (S)-4-amino-5-oxopentanoate + tRNA(Glu) + NADP(+) = L-glutamyl-tRNA(Glu) + NADPH + H(+). The protein operates within porphyrin-containing compound metabolism; protoporphyrin-IX biosynthesis; 5-aminolevulinate from L-glutamyl-tRNA(Glu): step 1/2. Its function is as follows. Catalyzes the NADPH-dependent reduction of glutamyl-tRNA(Glu) to glutamate 1-semialdehyde (GSA). This Pseudomonas savastanoi pv. phaseolicola (strain 1448A / Race 6) (Pseudomonas syringae pv. phaseolicola (strain 1448A / Race 6)) protein is Glutamyl-tRNA reductase.